The following is a 548-amino-acid chain: Probable nuclear hormone receptor HR3 (548 aa).

Residues 1 to 27 (MNNNQFHELFGSQWPPDQHGGHSSAST) are disordered. The segment at residues 101–176 (IIPCKVCGDK…LGMSRDAVKF (76 aa)) is a DNA-binding region (nuclear receptor). 2 NR C4-type zinc fingers span residues 104-124 (CKVC…CEGC) and 140-164 (CPRN…LQKC). Positions 198-228 (MRAQNDAAPDSVYDAQQQTPSSSDQFHGHYN) are disordered. Positions 211 to 222 (DAQQQTPSSSDQ) are enriched in polar residues. Positions 295-539 (ISKVLVKSLA…PALYKELFSL (245 aa)) constitute an NR LBD domain.

Belongs to the nuclear hormone receptor family. NR1 subfamily.

It is found in the nucleus. Its function is as follows. Putative receptor whose ligand is not yet known. This is Probable nuclear hormone receptor HR3 (HR3) from Manduca sexta (Tobacco hawkmoth).